The chain runs to 722 residues: Glycine--tRNA ligase beta subunit (722 aa).

The protein belongs to the class-II aminoacyl-tRNA synthetase family. Tetramer of two alpha and two beta subunits.

It is found in the cytoplasm. The catalysed reaction is tRNA(Gly) + glycine + ATP = glycyl-tRNA(Gly) + AMP + diphosphate. This chain is Glycine--tRNA ligase beta subunit (glyS), found in Synechocystis sp. (strain ATCC 27184 / PCC 6803 / Kazusa).